A 153-amino-acid chain; its full sequence is Ribosome maturation factor RimP (153 aa).

This sequence belongs to the RimP family.

It localises to the cytoplasm. Required for maturation of 30S ribosomal subunits. This Coxiella burnetii (strain CbuK_Q154) (Coxiella burnetii (strain Q154)) protein is Ribosome maturation factor RimP.